A 640-amino-acid polypeptide reads, in one-letter code: DNA topoisomerase 3 (640 aa).

The Toprim domain maps to 21–175 (RVLCVAEKNS…WRAQFSHLEP (155 aa)). Glutamate 27, aspartate 137, and aspartate 139 together coordinate Mg(2+). Residues 189–618 (DMKLVAAVEC…QLLPLYKEAF (430 aa)) form the Topo IA-type catalytic domain. Tyrosine 354 (O-(5'-phospho-DNA)-tyrosine intermediate) is an active-site residue.

The protein belongs to the type IA topoisomerase family. Mg(2+) serves as cofactor.

The catalysed reaction is ATP-independent breakage of single-stranded DNA, followed by passage and rejoining.. Its function is as follows. Introduces a single-strand break via transesterification at a target site in duplex DNA. Releases the supercoiling and torsional tension of DNA introduced during the DNA replication and transcription by transiently cleaving and rejoining one strand of the DNA duplex. The scissile phosphodiester is attacked by the catalytic tyrosine of the enzyme, resulting in the formation of a DNA-(5'-phosphotyrosyl)-enzyme intermediate and the expulsion of a 3'-OH DNA strand. In Candidozyma auris (Yeast), this protein is DNA topoisomerase 3 (TOP3).